Reading from the N-terminus, the 209-residue chain is ATP synthase subunit delta (209 aa).

It belongs to the ATPase delta chain family. F-type ATPases have 2 components, F(1) - the catalytic core - and F(0) - the membrane proton channel. F(1) has five subunits: alpha(3), beta(3), gamma(1), delta(1), epsilon(1). F(0) has three main subunits: a(1), b(2) and c(10-14). The alpha and beta chains form an alternating ring which encloses part of the gamma chain. F(1) is attached to F(0) by a central stalk formed by the gamma and epsilon chains, while a peripheral stalk is formed by the delta and b chains.

It is found in the cell inner membrane. F(1)F(0) ATP synthase produces ATP from ADP in the presence of a proton or sodium gradient. F-type ATPases consist of two structural domains, F(1) containing the extramembraneous catalytic core and F(0) containing the membrane proton channel, linked together by a central stalk and a peripheral stalk. During catalysis, ATP synthesis in the catalytic domain of F(1) is coupled via a rotary mechanism of the central stalk subunits to proton translocation. Functionally, this protein is part of the stalk that links CF(0) to CF(1). It either transmits conformational changes from CF(0) to CF(1) or is implicated in proton conduction. This is ATP synthase subunit delta from Psychrobacter sp. (strain PRwf-1).